The primary structure comprises 294 residues: Tissue factor (294 aa).

An N-terminal signal peptide occupies residues 1 to 28; it reads MAILVRPRLLAALAPTFLGCLLLQVIAG. At 29–251 the chain is on the extracellular side; the sequence is AGIPEKAFNL…TEQWKSFLGE (223 aa). Residues asparagine 37 and asparagine 57 are each glycosylated (N-linked (GlcNAc...) asparagine). Cysteine 75 and cysteine 83 are joined by a disulfide. N-linked (GlcNAc...) asparagine glycosylation is found at asparagine 169 and asparagine 200. Cysteines 218 and 241 form a disulfide. The WKS motif signature appears at 245–247; sequence WKS. Residues 252-274 traverse the membrane as a helical segment; that stretch reads TLIIVGAVVLLATIFIILLSISL. Cysteine 275 carries the S-palmitoyl cysteine lipid modification. The Cytoplasmic segment spans residues 275–294; the sequence is CKRRKNRAGQKGKNTPSRLA.

This sequence belongs to the tissue factor family. Interacts with HSPE; the interaction, inhibited by heparin, promotes the generation of activated factor X and activates coagulation in the presence of activated factor VII.

It localises to the membrane. Initiates blood coagulation by forming a complex with circulating factor VII or VIIa. The [TF:VIIa] complex activates factors IX or X by specific limited proteolysis. TF plays a role in normal hemostasis by initiating the cell-surface assembly and propagation of the coagulation protease cascade. This Mus musculus (Mouse) protein is Tissue factor (F3).